We begin with the raw amino-acid sequence, 2897 residues long: Chromodomain-helicase-DNA-binding protein 9 (2897 aa).

Positions Q173–N201 are enriched in polar residues. 3 disordered regions span residues Q173–S265, Q482–K525, and A537–L671. A Glycyl lysine isopeptide (Lys-Gly) (interchain with G-Cter in SUMO2) cross-link involves residue K197. Residues S220–S235 are compositionally biased toward low complexity. Polar residues-rich tracts occupy residues H247 to T260 and Q484 to R506. K499 is subject to N6-acetyllysine. The segment covering M508–K525 has biased composition (basic and acidic residues). Residue S550 is modified to Phosphoserine. Basic and acidic residues predominate over residues K573 to K593. K596 is covalently cross-linked (Glycyl lysine isopeptide (Lys-Gly) (interchain with G-Cter in SUMO2)). Phosphoserine is present on S611. The segment covering R634 to K644 has biased composition (basic residues). The segment covering Y645–G660 has biased composition (basic and acidic residues). Chromo domains are found at residues A690 to A761 and V773 to R839. Positions L868 to L872 match the LXXLL motif 1 motif. The 175-residue stretch at L872–L1046 folds into the Helicase ATP-binding domain. ATP is bound at residue D885–T892. The short motif at D997–H1000 is the DEAH box element. An LXXLL motif 2 motif is present at residues L1036–L1040. In terms of domain architecture, Helicase C-terminal spans L1186–R1337. A disordered region spans residues K1461–C1484. Over residues A1465–G1474 the composition is skewed to acidic residues. Phosphoserine occurs at positions 1468 and 1472. Positions D1475–C1484 are enriched in basic and acidic residues. Residues K1588, K1738, and K1903 each participate in a glycyl lysine isopeptide (Lys-Gly) (interchain with G-Cter in SUMO2) cross-link. S2026 is subject to Phosphoserine. Residues L2031–L2035 carry the LXXLL motif 3 motif. Residue K2038 forms a Glycyl lysine isopeptide (Lys-Gly) (interchain with G-Cter in SUMO2) linkage. Disordered regions lie at residues E2050–N2238 and G2305–K2337. Residues S2058 and S2059 each carry the phosphoserine modification. K2074 participates in a covalent cross-link: Glycyl lysine isopeptide (Lys-Gly) (interchain with G-Cter in SUMO2). Phosphoserine occurs at positions 2075 and 2079. A compositionally biased stretch (basic and acidic residues) spans S2094 to M2104. A compositionally biased stretch (low complexity) spans S2141–S2193. Positions A2203–D2216 are enriched in basic and acidic residues. A compositionally biased stretch (polar residues) spans A2221 to N2238. Positions Q2332–P2481 are binds A/T-rich DNA. Residues K2350, K2356, and K2361 each participate in a glycyl lysine isopeptide (Lys-Gly) (interchain with G-Cter in SUMO2) cross-link. The tract at residues K2429–K2436 is a.T hook-like. Positions L2721–L2725 match the LXXLL motif 4 motif. The interval G2729–S2777 is disordered. Positions T2739 to E2758 are enriched in basic and acidic residues. Over residues S2759–S2777 the composition is skewed to low complexity. Residues L2793–L2797 carry the LXXLL motif 5 motif. The segment at V2827 to D2897 is disordered. The span at V2840–G2857 shows a compositional bias: basic and acidic residues. K2843 is covalently cross-linked (Glycyl lysine isopeptide (Lys-Gly) (interchain with G-Cter in SUMO2)). Low complexity predominate over residues A2877–S2888.

The protein belongs to the SNF2/RAD54 helicase family. As to quaternary structure, interacts with PPARA. Probably interacts with ESR1 and NR1I3. Phosphorylated on serine and tyrosine residues. Widely expressed at low levels. In bone marrow, expression is restricted to osteoprogenitor cells adjacent to mature osteoblasts.

The protein resides in the cytoplasm. It is found in the nucleus. It catalyses the reaction ATP + H2O = ADP + phosphate + H(+). Functionally, probable ATP-dependent chromatin-remodeling factor. Acts as a transcriptional coactivator for PPARA and possibly other nuclear receptors. Has DNA-dependent ATPase activity and binds to A/T-rich DNA. Associates with A/T-rich regulatory regions in promoters of genes that participate in the differentiation of progenitors during osteogenesis. This Homo sapiens (Human) protein is Chromodomain-helicase-DNA-binding protein 9 (CHD9).